The primary structure comprises 72 residues: U1-sicaritoxin-Sdo1a (72 aa).

The signal sequence occupies residues Met1–Ala24. The propeptide occupies Glu25–Met41. Disulfide bonds link Cys43–Cys61, Cys50–Cys64, and Cys60–Cys69.

As to expression, expressed by the venom gland.

The protein localises to the secreted. This chain is U1-sicaritoxin-Sdo1a, found in Hexophthalma dolichocephala (Afrotropical spider).